We begin with the raw amino-acid sequence, 240 residues long: 1-(5-phosphoribosyl)-5-[(5-phosphoribosylamino)methylideneamino] imidazole-4-carboxamide isomerase (240 aa).

The active-site Proton acceptor is aspartate 8. The Proton donor role is filled by aspartate 129.

This sequence belongs to the HisA/HisF family.

The protein localises to the cytoplasm. It carries out the reaction 1-(5-phospho-beta-D-ribosyl)-5-[(5-phospho-beta-D-ribosylamino)methylideneamino]imidazole-4-carboxamide = 5-[(5-phospho-1-deoxy-D-ribulos-1-ylimino)methylamino]-1-(5-phospho-beta-D-ribosyl)imidazole-4-carboxamide. It functions in the pathway amino-acid biosynthesis; L-histidine biosynthesis; L-histidine from 5-phospho-alpha-D-ribose 1-diphosphate: step 4/9. The chain is 1-(5-phosphoribosyl)-5-[(5-phosphoribosylamino)methylideneamino] imidazole-4-carboxamide isomerase from Listeria welshimeri serovar 6b (strain ATCC 35897 / DSM 20650 / CCUG 15529 / CIP 8149 / NCTC 11857 / SLCC 5334 / V8).